Reading from the N-terminus, the 308-residue chain is Tetraspanin-12 (308 aa).

Over 1-41 the chain is Cytoplasmic; it reads MANRRQPVQHRAQQRVYRQSQIRYAPGAGGESEISCCVKYS. The chain crosses the membrane as a helical span at residues 42–62; sequence VFSFNVIFFLLGFGLLLFGVW. Topologically, residues 63–86 are extracellular; sequence AQIEKNTFVNMLSKASKLYLDPTW. Residues 87-107 form a helical membrane-spanning segment; it reads PLLIVGFLTFIIGFSGCVGSL. Topologically, residues 108–112 are cytoplasmic; that stretch reads RENTS. The helical transmembrane segment at 113–133 threads the bilayer; the sequence is FLTFYSTLLGLLLIAEFSAGV. At 134–268 the chain is on the extracellular side; sequence FAYACRDQLD…PKLQLWLNNN (135 aa). Asparagine 213 carries N-linked (GlcNAc...) asparagine glycosylation. A helical membrane pass occupies residues 269–289; sequence MLLVAVSMVIIAIIQVLGICF. Residues 290-308 are Cytoplasmic-facing; sequence AQNLKSDILAQRAKWYYTH.

This sequence belongs to the tetraspanin (TM4SF) family. May interact with protease sup-17; the interaction promotes sup-17 cell membrane localization. As to expression, expressed in the germline.

The protein resides in the cell membrane. The protein localises to the cytoplasmic vesicle membrane. It localises to the endosome membrane. Its subcellular location is the early endosome membrane. It is found in the late endosome membrane. The protein resides in the recycling endosome membrane. The protein localises to the golgi apparatus. It localises to the trans-Golgi network membrane. Its function is as follows. Functions redundantly with tsp-14 isoform a to regulate body size, embryonic and vulva development. Functions redundantly with tsp-14 (isoforms a and b) to regulate cell fate specification in the postembryonic mesodermal M lineage and male development. May regulate BMP-like Sma/Mab signaling by mediating protease sup-17 trafficking to the cell surface. Together with tsp-14, functions redundantly to maintain cell surface levels of the BMP type II receptor daf-4 (but not BMP type I receptor sma-6), probably by regulating endosomal sorting of receptors and their targeting to degradative lysosomes. Together with tsp-14 involved in maintaining the structural and functional integrity of the endosomal network. Together with tsp-14, probably acts by modulating the activation of glp-1, a Notch-like receptor, to regulate germline maturation. Probably acts by modulating the activation of lin-12, a Notch-like receptor, to regulate cell fate specification such as the anchor cell/ventral uterine precursor cell decision. The polypeptide is Tetraspanin-12 (Caenorhabditis elegans).